Consider the following 429-residue polypeptide: MKKLNTQSPDFQAGLKALLAFETAQNPETERIVADICADVQKRGDAALIEYTNKFDQTNAKSIDDLILTQADLNAAFERIPNDVQTALQTAARRVESYHQRQKMESWSYTDEDGTLLGQQITPLDRVGIYVPGGKAAYPSSVIMNAMPAHVAGVKEIIMVVPTPKGERNDIVLAAAYVAGVTKVFTVGGAQAVAALAYGTETIPQVDKITGPGNAFVAAAKRRVFGVVGIDMVAGPSEILVIADGTTPADWVAMDLFSQAEHDEIAQAILIGTSQAYLDEVEAAMDRLIETMPRRDIIEASLGNRGAMILAKDLDEACEIANYISPEHLELSVENPQEWAKKIRHAGAIFMGRYTGESLGDYCAGPNHVLPTSRTARFSSPLGTYDFQKRSSLIQVSEQGAQKLGETASVLAHGESLTAHARAAEFRMK.

Positions 130, 191, and 214 each coordinate NAD(+). Substrate-binding residues include S237, Q259, and H262. Zn(2+) is bound by residues Q259 and H262. Catalysis depends on proton acceptor residues E327 and H328. H328, D361, E415, and H420 together coordinate substrate. D361 provides a ligand contact to Zn(2+). A Zn(2+)-binding site is contributed by H420.

The protein belongs to the histidinol dehydrogenase family. It depends on Zn(2+) as a cofactor.

It catalyses the reaction L-histidinol + 2 NAD(+) + H2O = L-histidine + 2 NADH + 3 H(+). The protein operates within amino-acid biosynthesis; L-histidine biosynthesis; L-histidine from 5-phospho-alpha-D-ribose 1-diphosphate: step 9/9. Functionally, catalyzes the sequential NAD-dependent oxidations of L-histidinol to L-histidinaldehyde and then to L-histidine. The protein is Histidinol dehydrogenase of Neisseria meningitidis serogroup B (strain ATCC BAA-335 / MC58).